Here is a 75-residue protein sequence, read N- to C-terminus: Cruzioseptin-8 (75 aa).

A signal peptide spans 1-22; it reads MAFLKKCLFLVLFLGLVSLSIC. Residues 23–43 constitute a propeptide that is removed on maturation; it reads EEEKREEENEEVQEDDDQSEE. The interval 25–44 is disordered; it reads EKREEENEEVQEDDDQSEEK. The segment covering 30-41 has biased composition (acidic residues); sequence ENEEVQEDDDQS. Q72 bears the Glutamine amide mark. Positions 74–75 are excised as a propeptide; it reads EQ.

Expressed by the skin glands.

The protein resides in the secreted. Its function is as follows. Has antimicrobial activity. This is Cruzioseptin-8 from Cruziohyla calcarifer (Splendid leaf frog).